Here is a 359-residue protein sequence, read N- to C-terminus: 3-dehydroquinate synthase (359 aa).

NAD(+) is bound by residues 69–74, 103–107, 127–128, Lys140, Lys149, and 167–170; these read DGEQHK, GVIGD, TT, and TLDT. The Zn(2+) site is built by Glu182, His245, and His262.

This sequence belongs to the sugar phosphate cyclases superfamily. Dehydroquinate synthase family. It depends on Co(2+) as a cofactor. Requires Zn(2+) as cofactor. NAD(+) serves as cofactor.

It is found in the cytoplasm. It carries out the reaction 7-phospho-2-dehydro-3-deoxy-D-arabino-heptonate = 3-dehydroquinate + phosphate. It functions in the pathway metabolic intermediate biosynthesis; chorismate biosynthesis; chorismate from D-erythrose 4-phosphate and phosphoenolpyruvate: step 2/7. Its function is as follows. Catalyzes the conversion of 3-deoxy-D-arabino-heptulosonate 7-phosphate (DAHP) to dehydroquinate (DHQ). The chain is 3-dehydroquinate synthase from Nitrosococcus oceani (strain ATCC 19707 / BCRC 17464 / JCM 30415 / NCIMB 11848 / C-107).